The sequence spans 319 residues: MKPENKLPVLDLISAEMKTVVNTLQPDLPPWPATGTIAEQRQYYTLERRFWNVGAPEMATRAYRVPTKYGQVKTRIFYPQPDSPATLFYLHGGGFILGNLDTHDRIMRLLASYSQCTVIGIDYTLSPEARFPQAIEEIVAACCYFHQQAEDYQINMSRIGFAGDSAGAMLALASALWLRDKQIDCGKVAGVLLWYGLYGLRDSVTRRLLGGVWDGLTQQDLQMYEEAYLSNDADRESPYYCLFNNDLTREVPPCFIAGAEFDPLLDDSRLLYQTLAAHQQPCEFKLYPGTLHAFLHYSRMMKTADEALLDGAQFFTAQL.

The Involved in the stabilization of the negatively charged intermediate by the formation of the oxyanion hole motif lies at 91 to 93 (HGG). Catalysis depends on residues serine 165, aspartate 262, and histidine 292.

It belongs to the 'GDXG' lipolytic enzyme family. Homodimer. Interacts with MalT and MelA.

The protein localises to the cytoplasm. Its function is as follows. Displays esterase activity towards short chain fatty esters (acyl chain length of up to 8 carbons). Able to hydrolyze triacetylglycerol (triacetin) and tributyrylglycerol (tributyrin), but not trioleylglycerol (triolein) or cholesterol oleate. Negatively regulates MalT activity by antagonizing maltotriose binding. Inhibits MelA galactosidase activity. The polypeptide is Acetyl esterase (Escherichia coli O127:H6 (strain E2348/69 / EPEC)).